Here is a 393-residue protein sequence, read N- to C-terminus: Putative cytochrome P450 143 (393 aa).

Residue C342 coordinates heme.

The protein belongs to the cytochrome P450 family. Heme is required as a cofactor.

This chain is Putative cytochrome P450 143 (cyp143), found in Mycobacterium bovis (strain ATCC BAA-935 / AF2122/97).